Here is a 327-residue protein sequence, read N- to C-terminus: Phenylalanine--tRNA ligase alpha subunit (327 aa).

Glu-252 lines the Mg(2+) pocket.

Belongs to the class-II aminoacyl-tRNA synthetase family. Phe-tRNA synthetase alpha subunit type 1 subfamily. As to quaternary structure, tetramer of two alpha and two beta subunits. Mg(2+) serves as cofactor.

The protein localises to the cytoplasm. The enzyme catalyses tRNA(Phe) + L-phenylalanine + ATP = L-phenylalanyl-tRNA(Phe) + AMP + diphosphate + H(+). The sequence is that of Phenylalanine--tRNA ligase alpha subunit from Yersinia enterocolitica serotype O:8 / biotype 1B (strain NCTC 13174 / 8081).